A 322-amino-acid chain; its full sequence is Atrochrysone carboxyl ACP thioesterase dmxR1 (322 aa).

The Zn(2+) site is built by histidine 105, histidine 107, aspartate 109, and histidine 110. The active-site Proton donor/acceptor is the aspartate 109.

Belongs to the metallo-beta-lactamase superfamily. Zn(2+) is required as a cofactor.

It catalyses the reaction atrochrysone carboxyl-[ACP] + H2O = atrochrysone carboxylate + holo-[ACP] + H(+). Its pathway is secondary metabolite biosynthesis. In terms of biological role, atrochrysone carboxyl ACP thioesterase; part of the gene cluster that mediates the biosynthesis of the dimeric xanthones cryptosporioptides. The pathway begins with the synthesis of atrochrysone thioester by the polyketide synthase dmx-nrPKS. The atrochrysone carboxyl ACP thioesterase dmxR1 then breaks the thioester bond and releases the atrochrysone carboxylic acid from dmx-nrPKS. Atrochrysone carboxylic acid is decarboxylated by the decarboxylase dmxR15, and oxidized by the anthrone oxygenase dmxR16 to yield emodin. Emodin is then reduced to emodin hydroquinone by the oxidoreductase dmxR7. A-ring reduction by the short chain dehydrogenase dmxR18, dehydration by the scytalone dehydratase-like protein dmxR17 and probable spontaneous re-oxidation, results in overall deoxygenation to chrysophanol. Baeyer-Villiger oxidation by the Baeyer-Villiger monooxygenase (BVMO) dmxR6 then yields monodictylactone in equilibrium with monodictyphenone. In the case of the cryptosporioptides biosynthesis, monodictylactone is reduced at C-12 to an alcohol (by the short chain dehydrogenases dmxR12 or dmxR8) and hydroxylated at C-5 by dmxR9, yielding the electron-rich aromatic which could eliminate H(2)O to form the ortho-quinonemethide, followed by tautomerisation to paraquinone and complete the formal reduction to produce the 10-methylgroup. Conjugate addition of C-4a-OH to the resulting paraquinone by the monooxygenase dmxR10 then gives cyclohexadienone, which is then reduced at C-5 by the short chain dehydrogenase dmxR3 to give the dihydroxanthone. The 6,7-epoxide in the cryptosporioptides could be introduced by the cytochrome P450 monooxygenase dmxL3. The highly reducing PKS dmxL2 manufactures butyrate, which is further carboxylated by dmxL1 to form ethylmalonate. It is not yet clear whether the carboxylation occurs while the butyrate is attached to the ACP of dmxL2, but this unusual fungal metabolite could then be esterified to O-5 by the O-acetyltransferase dmxR13. Finally, dimerization performed by dmxR5 gives the observed dimers cryptosporioptides A, B and C as the final products of the pathway. This is Atrochrysone carboxyl ACP thioesterase dmxR1 from Cryptosporiopsis sp. (strain 8999).